The following is a 144-amino-acid chain: Large ribosomal subunit protein uL15 (144 aa).

Residues 1–44 (MNLNELQPAAGSRHVRNRVGRGTSSGNGKTSGRGQKGQKARGKV) form a disordered region. Gly residues predominate over residues 23 to 35 (TSSGNGKTSGRGQ).

The protein belongs to the universal ribosomal protein uL15 family. In terms of assembly, part of the 50S ribosomal subunit.

In terms of biological role, binds to the 23S rRNA. This chain is Large ribosomal subunit protein uL15, found in Leuconostoc mesenteroides subsp. mesenteroides (strain ATCC 8293 / DSM 20343 / BCRC 11652 / CCM 1803 / JCM 6124 / NCDO 523 / NBRC 100496 / NCIMB 8023 / NCTC 12954 / NRRL B-1118 / 37Y).